The chain runs to 369 residues: Anhydro-N-acetylmuramic acid kinase (369 aa).

Position 12-19 (12-19) interacts with ATP; it reads GTSLDGVD.

This sequence belongs to the anhydro-N-acetylmuramic acid kinase family.

The catalysed reaction is 1,6-anhydro-N-acetyl-beta-muramate + ATP + H2O = N-acetyl-D-muramate 6-phosphate + ADP + H(+). The protein operates within amino-sugar metabolism; 1,6-anhydro-N-acetylmuramate degradation. Its pathway is cell wall biogenesis; peptidoglycan recycling. Functionally, catalyzes the specific phosphorylation of 1,6-anhydro-N-acetylmuramic acid (anhMurNAc) with the simultaneous cleavage of the 1,6-anhydro ring, generating MurNAc-6-P. Is required for the utilization of anhMurNAc either imported from the medium or derived from its own cell wall murein, and thus plays a role in cell wall recycling. The polypeptide is Anhydro-N-acetylmuramic acid kinase (Escherichia coli (strain SMS-3-5 / SECEC)).